The following is an 883-amino-acid chain: Translation initiation factor IF-2 (883 aa).

Disordered stretches follow at residues 52-102 (KGRD…VNVE) and 115-297 (VEAE…PTQP). Basic and acidic residues-rich tracts occupy residues 115–179 (VEAE…REAT) and 204–237 (AAEKEEARRREEEKERRRLEQEARREREAEERAA). Low complexity predominate over residues 239–248 (KTGATAPAAK). The segment covering 265 to 275 (PGRRGGKKGGR) has biased composition (basic residues). Low complexity predominate over residues 276–285 (RAASGGEAAK). One can recognise a tr-type G domain in the interval 383-550 (PRPPVVTVMG…AILLQAELME (168 aa)). A G1 region spans residues 392–399 (GHVDHGKT). 392 to 399 (GHVDHGKT) is a GTP binding site. Residues 417–421 (GITQH) are G2. Residues 438–441 (DTPG) are G3. GTP-binding positions include 438-442 (DTPGH) and 492-495 (NKID). Residues 492-495 (NKID) are G4. A G5 region spans residues 528 to 530 (SAK).

The protein belongs to the TRAFAC class translation factor GTPase superfamily. Classic translation factor GTPase family. IF-2 subfamily.

The protein localises to the cytoplasm. Functionally, one of the essential components for the initiation of protein synthesis. Protects formylmethionyl-tRNA from spontaneous hydrolysis and promotes its binding to the 30S ribosomal subunits. Also involved in the hydrolysis of GTP during the formation of the 70S ribosomal complex. This is Translation initiation factor IF-2 from Alkalilimnicola ehrlichii (strain ATCC BAA-1101 / DSM 17681 / MLHE-1).